Here is a 1238-residue protein sequence, read N- to C-terminus: Kinesin-related protein 10 (1238 aa).

The Kinesin motor domain occupies 16–374; sequence SMIVTVRIRP…LKYAQRAKSI (359 aa). 116–123 contributes to the ATP binding site; the sequence is GASGAGKT. A compositionally biased stretch (low complexity) spans 417 to 436; that stretch reads NNNNSNNNNNNNNNNYFSNS. A disordered region spans residues 417 to 503; the sequence is NNNNSNNNNN…DGEDSNNRDN (87 aa). Over residues 437 to 464 the composition is skewed to polar residues; the sequence is FGSCGNKNQPIKQPTPPTSLFHQQNQKY. A compositionally biased stretch (acidic residues) spans 468–497; the sequence is DDDDDDDNDQEENNDEVLINEDDEEVDGED. Positions 527–602 form a coiled coil; it reads TLKKTQSIQR…NNQWRRKLQS (76 aa). Composition is skewed to low complexity over residues 726 to 795, 918 to 934, and 961 to 971; these read NDIN…NIIN, LLPS…SSPL, and NNNNNNNNIAP. Disordered regions lie at residues 726-802, 891-971, 1134-1156, and 1191-1238; these read NDIN…LKPR, EIDD…NIAP, TPTS…TTST, and ATLT…KIIK. A compositionally biased stretch (polar residues) spans 1191 to 1203; sequence ATLTPNRNNSQIV. The span at 1215 to 1228 shows a compositional bias: low complexity; sequence PTSSSSRLLPSSRT. Positions 1229 to 1238 are enriched in polar residues; sequence TVNTSRKIIK.

It belongs to the TRAFAC class myosin-kinesin ATPase superfamily. Kinesin family.

It is found in the cytoplasm. The protein resides in the cytoskeleton. In terms of biological role, microtubule-associated force-producing protein that plays a role in organelle transport. Its motor activity is directed toward the microtubule's plus end. Cooperates with kif8 and dynein to organize interphase microtubules. The sequence is that of Kinesin-related protein 10 (kif10) from Dictyostelium discoideum (Social amoeba).